Consider the following 129-residue polypeptide: Lysozyme C (129 aa).

Residues 1–129 form the C-type lysozyme domain; that stretch reads KVYGRCELAA…VSVWTRGCRL (129 aa). 4 cysteine pairs are disulfide-bonded: cysteine 6/cysteine 127, cysteine 30/cysteine 115, cysteine 64/cysteine 80, and cysteine 76/cysteine 94. Catalysis depends on residues glutamate 35 and aspartate 52.

This sequence belongs to the glycosyl hydrolase 22 family. As to quaternary structure, monomer.

The protein resides in the secreted. The catalysed reaction is Hydrolysis of (1-&gt;4)-beta-linkages between N-acetylmuramic acid and N-acetyl-D-glucosamine residues in a peptidoglycan and between N-acetyl-D-glucosamine residues in chitodextrins.. Lysozymes have primarily a bacteriolytic function; those in tissues and body fluids are associated with the monocyte-macrophage system and enhance the activity of immunoagents. This is Lysozyme C (LYZ) from Lophura leucomelanos (Kalij pheasant).